The sequence spans 275 residues: Nitrogenase iron protein 2 (275 aa).

9-16 (GKGGIGKS) lines the ATP pocket. Residue Cys-97 coordinates [4Fe-4S] cluster. Arg-100 carries the ADP-ribosylarginine; by dinitrogenase reductase ADP-ribosyltransferase modification. Cys-132 lines the [4Fe-4S] cluster pocket.

The protein belongs to the NifH/BchL/ChlL family. Homodimer. [4Fe-4S] cluster serves as cofactor. Post-translationally, the reversible ADP-ribosylation of Arg-100 inactivates the nitrogenase reductase and regulates nitrogenase activity.

The enzyme catalyses N2 + 8 reduced [2Fe-2S]-[ferredoxin] + 16 ATP + 16 H2O = H2 + 8 oxidized [2Fe-2S]-[ferredoxin] + 2 NH4(+) + 16 ADP + 16 phosphate + 6 H(+). Functionally, the key enzymatic reactions in nitrogen fixation are catalyzed by the nitrogenase complex, which has 2 components: the iron protein (component 2) and a component 1 which is either a molybdenum-iron protein, a vanadium-iron, or an iron-iron protein. The sequence is that of Nitrogenase iron protein 2 (anfH) from Rhodobacter capsulatus (Rhodopseudomonas capsulata).